The sequence spans 387 residues: Acyl-[acyl-carrier-protein] 6-desaturase (387 aa).

A chloroplast-targeting transit peptide spans 1-29; the sequence is MALVFKSIGAHKTPPCTLNLASPALYHTR. Fe cation is bound by residues E131, E169, H172, E222, E255, and H258.

This sequence belongs to the fatty acid desaturase type 2 family. The cofactor is Fe(2+).

The protein localises to the plastid. The protein resides in the chloroplast. It catalyses the reaction hexadecanoyl-[ACP] + 2 reduced [2Fe-2S]-[ferredoxin] + O2 + 2 H(+) = (6Z)-hexadecenoyl-[ACP] + 2 oxidized [2Fe-2S]-[ferredoxin] + 2 H2O. Its pathway is lipid metabolism; fatty acid metabolism. Inhibited by KCN or H(2)O(2). In terms of biological role, delta(6) fatty acid desaturase introducing a cis double bond at carbon 6 of palmitoyl-[acyl-carrier protein](16:0-ACP), producing 16:1(6Z)-ACP. No activity with the coenzyme A ester of the fatty acid. The position of the double bond is determined by its distance from the carboxyl end of the fatty acid. Low activity with several saturated acyl-[acyl-carrier protein]s, including 14:0-ACP and 18:0-ACP. Requires reduced ferredoxin for detectable in vitro activity. This Thunbergia alata (Black-eyed Susan vine) protein is Acyl-[acyl-carrier-protein] 6-desaturase.